Consider the following 673-residue polypeptide: DNA ligase (673 aa).

NAD(+) contacts are provided by residues 32–36 (DAEYD), 81–82 (SL), and Glu-113. The active-site N6-AMP-lysine intermediate is Lys-115. Residues Arg-136, Glu-173, Lys-290, and Lys-314 each contribute to the NAD(+) site. Positions 408, 411, 426, and 432 each coordinate Zn(2+). The region spanning 595 to 673 (EIDSPFAGKT…EAEMIRLLGA (79 aa)) is the BRCT domain.

Belongs to the NAD-dependent DNA ligase family. LigA subfamily. Requires Mg(2+) as cofactor. It depends on Mn(2+) as a cofactor.

The catalysed reaction is NAD(+) + (deoxyribonucleotide)n-3'-hydroxyl + 5'-phospho-(deoxyribonucleotide)m = (deoxyribonucleotide)n+m + AMP + beta-nicotinamide D-nucleotide.. Its function is as follows. DNA ligase that catalyzes the formation of phosphodiester linkages between 5'-phosphoryl and 3'-hydroxyl groups in double-stranded DNA using NAD as a coenzyme and as the energy source for the reaction. It is essential for DNA replication and repair of damaged DNA. In Serratia proteamaculans (strain 568), this protein is DNA ligase.